We begin with the raw amino-acid sequence, 365 residues long: NAC domain-containing protein 43 (365 aa).

Residues 16–180 form the NAC domain; that stretch reads VPPGFRFHPT…GWVVCRIFKK (165 aa). The DNA-binding element occupies 116 to 186; that stretch reads IGMRKTLVFY…IFKKKNLHKT (71 aa).

As to expression, expressed in various aboveground tissues undergoing thickening of the lignified secondary wall such as anthers, filaments of stamens, the base of carpels, styles, the boundaries between siliques and pedicels, the midrib of leaf veins, and inflorescence stems, specifically in interfascicular fibers (sclerenchyma), cells differentiating into vascular vessels, and xylary fibers (secondary xylem).

It localises to the nucleus. Functionally, transcription activator of genes involved in biosynthesis of secondary walls. Together with NST2 and NST3, required for the secondary cell wall thickening of sclerenchymatous fibers, secondary xylem (tracheary elements), and of the anther endocethium, which is necessary for anther dehiscence. May also regulate the secondary cell wall lignification of other tissues. This is NAC domain-containing protein 43 (NAC043) from Arabidopsis thaliana (Mouse-ear cress).